Consider the following 103-residue polypeptide: Large ribosomal subunit protein bL21 (103 aa).

It belongs to the bacterial ribosomal protein bL21 family. As to quaternary structure, part of the 50S ribosomal subunit. Contacts protein L20.

This protein binds to 23S rRNA in the presence of protein L20. The sequence is that of Large ribosomal subunit protein bL21 from Paraburkholderia phymatum (strain DSM 17167 / CIP 108236 / LMG 21445 / STM815) (Burkholderia phymatum).